A 508-amino-acid polypeptide reads, in one-letter code: Steroid 17-alpha-hydroxylase/17,20 lyase (508 aa).

Asparagine 202 serves as a coordination point for substrate. Cysteine 442 contributes to the heme binding site.

The protein belongs to the cytochrome P450 family. Heme is required as a cofactor.

It localises to the endoplasmic reticulum membrane. It is found in the microsome membrane. The enzyme catalyses a C21-steroid + reduced [NADPH--hemoprotein reductase] + O2 = a 17alpha-hydroxy-C21-steroid + oxidized [NADPH--hemoprotein reductase] + H2O + H(+). It carries out the reaction progesterone + reduced [NADPH--hemoprotein reductase] + O2 = 17alpha-hydroxyprogesterone + oxidized [NADPH--hemoprotein reductase] + H2O + H(+). The catalysed reaction is pregnenolone + reduced [NADPH--hemoprotein reductase] + O2 = 17alpha-hydroxypregnenolone + oxidized [NADPH--hemoprotein reductase] + H2O + H(+). It catalyses the reaction 17alpha-hydroxyprogesterone + reduced [NADPH--hemoprotein reductase] + O2 = androst-4-ene-3,17-dione + acetate + oxidized [NADPH--hemoprotein reductase] + H2O + 2 H(+). The enzyme catalyses 17alpha-hydroxyprogesterone + reduced [NADPH--hemoprotein reductase] + O2 = 16alpha,17alpha-dihydroxyprogesterone + oxidized [NADPH--hemoprotein reductase] + H2O + H(+). It carries out the reaction 16alpha,17alpha-dihydroxyprogesterone + reduced [NADPH--hemoprotein reductase] + O2 = 6beta,16alpha,17alpha-trihydroxyprogesterone + oxidized [NADPH--hemoprotein reductase] + H2O + H(+). The catalysed reaction is 17alpha-hydroxypregnenolone + reduced [NADPH--hemoprotein reductase] + O2 = 3beta-hydroxyandrost-5-en-17-one + acetate + oxidized [NADPH--hemoprotein reductase] + H2O + 2 H(+). It catalyses the reaction 16alpha,17alpha-dihydroxypregnenolone + reduced [NADPH--hemoprotein reductase] + O2 = 3beta,16alpha-dihydroxy-androst-5-en-17-one + acetate + oxidized [NADPH--hemoprotein reductase] + H2O + 2 H(+). The enzyme catalyses 3beta-hydroxyandrost-5-en-17-one + reduced [NADPH--hemoprotein reductase] + O2 = 3beta,16alpha-dihydroxy-androst-5-en-17-one + oxidized [NADPH--hemoprotein reductase] + H2O + H(+). It carries out the reaction androst-4-ene-3,17-dione + reduced [NADPH--hemoprotein reductase] + O2 = 16alpha-hydroxyandrost-4-ene-3,17-dione + oxidized [NADPH--hemoprotein reductase] + H2O + H(+). It participates in steroid hormone biosynthesis. Its pathway is steroid biosynthesis; glucocorticoid biosynthesis. Its activity is regulated as follows. Regulated predominantly by intracellular cAMP levels. The 17,20-lyase activity is stimulated by cytochrome b5, which acts as an allosteric effector increasing the Vmax of the lyase activity. Its function is as follows. A cytochrome P450 monooxygenase involved in corticoid and androgen biosynthesis. Catalyzes 17-alpha hydroxylation of C21 steroids, which is common for both pathways. A second oxidative step, required only for androgen synthesis, involves an acyl-carbon cleavage. The 17-alpha hydroxy intermediates, as part of adrenal glucocorticoids biosynthesis pathway, are precursors of cortisol. Hydroxylates steroid hormones, pregnenolone and progesterone to form 17-alpha hydroxy metabolites, followed by the cleavage of the C17-C20 bond to form C19 steroids, dehydroepiandrosterone (DHEA) and androstenedione. Has 16-alpha hydroxylase activity. Catalyzes 16-alpha hydroxylation of 17-alpha hydroxy pregnenolone, followed by the cleavage of the C17-C20 bond to form 16-alpha-hydroxy DHEA. Also 16-alpha hydroxylates androgens, relevant for estriol synthesis. Mechanistically, uses molecular oxygen inserting one oxygen atom into a substrate, and reducing the second into a water molecule, with two electrons provided by NADPH via cytochrome P450 reductase (CPR; NADPH-ferrihemoprotein reductase). The sequence is that of Steroid 17-alpha-hydroxylase/17,20 lyase (CYP17A1) from Papio cynocephalus (Yellow baboon).